The following is a 190-amino-acid chain: Isopentenyl-diphosphate Delta-isomerase (190 aa).

Positions 27 and 34 each coordinate Mn(2+). The Nudix hydrolase domain occupies 32–166; it reads ALHLAFSCHV…PWAFSPWLTL (135 aa). C69 is a catalytic residue. H71 serves as a coordination point for Mn(2+). E89 provides a ligand contact to Mg(2+). Mn(2+)-binding residues include E116 and E118. E118 is a catalytic residue.

This sequence belongs to the IPP isomerase type 1 family. Requires Mg(2+) as cofactor. Mn(2+) serves as cofactor.

The protein localises to the cytoplasm. The enzyme catalyses isopentenyl diphosphate = dimethylallyl diphosphate. Its pathway is isoprenoid biosynthesis; dimethylallyl diphosphate biosynthesis; dimethylallyl diphosphate from isopentenyl diphosphate: step 1/1. Catalyzes the 1,3-allylic rearrangement of the homoallylic substrate isopentenyl (IPP) to its highly electrophilic allylic isomer, dimethylallyl diphosphate (DMAPP). This is Isopentenyl-diphosphate Delta-isomerase from Clavibacter sepedonicus (Clavibacter michiganensis subsp. sepedonicus).